A 149-amino-acid polypeptide reads, in one-letter code: Protein SprT-like (149 aa).

Residues 6-147 (LQALVEQISI…VCGRCRSKLK (142 aa)) form the SprT-like domain. Position 67 (H67) interacts with Zn(2+). Residue E68 is part of the active site. H71 contacts Zn(2+).

It belongs to the SprT family. Zn(2+) is required as a cofactor.

Its subcellular location is the cytoplasm. This is Protein SprT-like from Geobacillus kaustophilus (strain HTA426).